The chain runs to 453 residues: Adenylyltransferase and sulfurtransferase MOCS3 (453 aa).

The residue at position 62 (threonine 62) is a Phosphothreonine. ATP-binding positions include glycine 101, aspartate 122, 129–133 (SNFHR), lysine 146, and 190–191 (DN). Residues cysteine 231 and cysteine 234 each contribute to the Zn(2+) site. The Glycyl thioester intermediate; for adenylyltransferase activity role is filled by cysteine 248. Residues cysteine 306 and cysteine 309 each coordinate Zn(2+). The Rhodanese domain occupies 355 to 451 (QAQPHLLIDV…WTNSVDPSFP (97 aa)). Residue cysteine 410 is the Cysteine persulfide intermediate; for sulfurtransferase activity of the active site.

The protein in the N-terminal section; belongs to the HesA/MoeB/ThiF family. UBA4 subfamily. Zn(2+) is required as a cofactor.

The protein resides in the cytoplasm. It localises to the cytosol. It catalyses the reaction [molybdopterin-synthase sulfur-carrier protein]-C-terminal Gly-Gly + ATP + H(+) = [molybdopterin-synthase sulfur-carrier protein]-C-terminal Gly-Gly-AMP + diphosphate. It carries out the reaction [molybdopterin-synthase sulfur-carrier protein]-C-terminal Gly-Gly-AMP + S-sulfanyl-L-cysteinyl-[cysteine desulfurase] + AH2 = [molybdopterin-synthase sulfur-carrier protein]-C-terminal-Gly-aminoethanethioate + L-cysteinyl-[cysteine desulfurase] + A + AMP + 2 H(+). Its pathway is tRNA modification; 5-methoxycarbonylmethyl-2-thiouridine-tRNA biosynthesis. It participates in cofactor biosynthesis; molybdopterin biosynthesis. Plays a central role in 2-thiolation of mcm(5)S(2)U at tRNA wobble positions of cytosolic tRNA(Lys), tRNA(Glu) and tRNA(Gln). Also essential during biosynthesis of the molybdenum cofactor. Acts by mediating the C-terminal thiocarboxylation of sulfur carriers URM1 and MOCS2A. Its N-terminus first activates URM1 and MOCS2A as acyl-adenylates (-COAMP), then the persulfide sulfur on the catalytic cysteine is transferred to URM1 and MOCS2A to form thiocarboxylation (-COSH) of their C-terminus. The reaction probably involves hydrogen sulfide that is generated from the persulfide intermediate and that acts as a nucleophile towards URM1 and MOCS2A. Subsequently, a transient disulfide bond is formed. Does not use thiosulfate as sulfur donor; NFS1 probably acting as a sulfur donor for thiocarboxylation reactions. This Drosophila yakuba (Fruit fly) protein is Adenylyltransferase and sulfurtransferase MOCS3.